The primary structure comprises 268 residues: Thiazole synthase (268 aa).

The active-site Schiff-base intermediate with DXP is lysine 96. Residues glycine 157, 185–186 (AG), and 207–208 (NT) contribute to the 1-deoxy-D-xylulose 5-phosphate site. The interval 238–268 (PMRPREAASPSSPVEGVPFTPTGPRPGRGPQ) is disordered. Pro residues predominate over residues 258 to 268 (PTGPRPGRGPQ).

This sequence belongs to the ThiG family. In terms of assembly, homotetramer. Forms heterodimers with either ThiH or ThiS.

It is found in the cytoplasm. It carries out the reaction [ThiS sulfur-carrier protein]-C-terminal-Gly-aminoethanethioate + 2-iminoacetate + 1-deoxy-D-xylulose 5-phosphate = [ThiS sulfur-carrier protein]-C-terminal Gly-Gly + 2-[(2R,5Z)-2-carboxy-4-methylthiazol-5(2H)-ylidene]ethyl phosphate + 2 H2O + H(+). The protein operates within cofactor biosynthesis; thiamine diphosphate biosynthesis. Functionally, catalyzes the rearrangement of 1-deoxy-D-xylulose 5-phosphate (DXP) to produce the thiazole phosphate moiety of thiamine. Sulfur is provided by the thiocarboxylate moiety of the carrier protein ThiS. In vitro, sulfur can be provided by H(2)S. The protein is Thiazole synthase of Thermus thermophilus (strain ATCC 27634 / DSM 579 / HB8).